A 206-amino-acid chain; its full sequence is Dephospho-CoA kinase (206 aa).

Residues 4 to 200 (TVALTGGIGS…ASYLKLASQF (197 aa)) form the DPCK domain. An ATP-binding site is contributed by 12 to 17 (GSGKST).

This sequence belongs to the CoaE family.

The protein resides in the cytoplasm. It catalyses the reaction 3'-dephospho-CoA + ATP = ADP + CoA + H(+). The protein operates within cofactor biosynthesis; coenzyme A biosynthesis; CoA from (R)-pantothenate: step 5/5. Functionally, catalyzes the phosphorylation of the 3'-hydroxyl group of dephosphocoenzyme A to form coenzyme A. In Salmonella paratyphi A (strain ATCC 9150 / SARB42), this protein is Dephospho-CoA kinase.